The sequence spans 226 residues: Probable functional amyloid protease FapD (226 aa).

An N-terminal signal peptide occupies residues 1–18; that stretch reads MRTLILSLLLLVDLTTQA. Residues 50-180 enclose the Peptidase C39 domain; sequence QKTDFSCGAA…KGWNGIVFAV (131 aa). Cys-56 is an active-site residue.

The protein belongs to the FapD family.

Its subcellular location is the periplasm. Probable protease that might be involved in processing fibril precursors. Upon overexpression of the endogenous six-gene locus (fapA-fapF), cells form large clumps during liquid growth, make large amounts of biofilm and produce amyloid fibrils. This chain is Probable functional amyloid protease FapD, found in Pseudomonas aeruginosa (strain ATCC 15692 / DSM 22644 / CIP 104116 / JCM 14847 / LMG 12228 / 1C / PRS 101 / PAO1).